The chain runs to 562 residues: Nicotinate phosphoribosyltransferase (562 aa).

Residues Tyr-36, Phe-183, and Thr-225 each contribute to the nicotinate site. At His-228 the chain carries Phosphohistidine. Position 397 (Thr-397) interacts with 5-phospho-alpha-D-ribose 1-diphosphate.

It belongs to the NAPRTase family. Requires Mg(2+) as cofactor. Mn(2+) serves as cofactor. Transiently phosphorylated on a His residue during the reaction cycle. Phosphorylation strongly increases the affinity for substrates and increases the rate of nicotinate D-ribonucleotide production. Dephosphorylation regenerates the low-affinity form of the enzyme, leading to product release.

It catalyses the reaction nicotinate + 5-phospho-alpha-D-ribose 1-diphosphate + ATP + H2O = nicotinate beta-D-ribonucleotide + ADP + phosphate + diphosphate. Its pathway is cofactor biosynthesis; NAD(+) biosynthesis; nicotinate D-ribonucleotide from nicotinate: step 1/1. Catalyzes the first step in the biosynthesis of NAD from nicotinic acid, the ATP-dependent synthesis of beta-nicotinate D-ribonucleotide from nicotinate and 5-phospho-D-ribose 1-phosphate. Helps prevent cellular oxidative stress via its role in NAD biosynthesis. This is Nicotinate phosphoribosyltransferase from Caenorhabditis elegans.